The following is a 411-amino-acid chain: Aspartokinase (411 aa).

Residue 7–10 (KFGG) coordinates ATP. 25–30 (RVIEEK) provides a ligand contact to substrate. Ser-41 contributes to the ATP binding site. Substrate is bound by residues 47-49 (TDE), Glu-74, 125-126 (LN), 150-153 (RGGS), and Ser-153. ATP is bound by residues 173–174 (TD) and 179–184 (FTTDPR). ACT domains are found at residues 264–338 (VTVF…SETG) and 344–411 (IVGS…KSER). Substrate contacts are provided by residues 289–291 (NVD), Gln-295, 355–356 (VA), 369–370 (QV), and 376–377 (SE).

The protein belongs to the aspartokinase family. As to quaternary structure, tetramer consisting of 2 isoforms Alpha (catalytic and regulation) and of a homodimer of 2 isoforms Beta (regulation).

The enzyme catalyses L-aspartate + ATP = 4-phospho-L-aspartate + ADP. The protein operates within amino-acid biosynthesis; L-lysine biosynthesis via DAP pathway; (S)-tetrahydrodipicolinate from L-aspartate: step 1/4. Its pathway is amino-acid biosynthesis; L-methionine biosynthesis via de novo pathway; L-homoserine from L-aspartate: step 1/3. It functions in the pathway amino-acid biosynthesis; L-threonine biosynthesis; L-threonine from L-aspartate: step 1/5. With respect to regulation, lysine-sensitive. In terms of biological role, catalyzes the phosphorylation of the beta-carboxyl group of aspartic acid with ATP to yield 4-phospho-L-aspartate, which is involved in the branched biosynthetic pathway leading to the biosynthesis of amino acids threonine, isoleucine and methionine. The protein is Aspartokinase (lysC) of Bacillus sp. (strain MGA3).